A 248-amino-acid chain; its full sequence is Homeotic protein ultrabithorax (248 aa).

The segment covering 116-125 (GTGGGGGGSA) has biased composition (gly residues). A disordered region spans residues 116-191 (GTGGGGGGSA…GSAGVVGGAG (76 aa)). Low complexity predominate over residues 126-139 (GSANGANNTANGQN). 2 stretches are compositionally biased toward gly residues: residues 140–152 (TSGG…GGGM) and 182–191 (GSAGVVGGAG). The short motif at 241–246 (FYPWMA) is the Antp-type hexapeptide element.

Belongs to the Antp homeobox family.

It localises to the nucleus. Its function is as follows. Sequence-specific transcription factor which is part of a developmental regulatory system that provides cells with specific positional identities on the anterior-posterior axis. Binds the consensus region 5'-TTAAT[GT][GA]-3'. This chain is Homeotic protein ultrabithorax (Ubx), found in Musca domestica (House fly).